The sequence spans 196 residues: Probable GTP-binding protein EngB (196 aa).

An EngB-type G domain is found at 24 to 196 (ELSEVALSGR…IWNLIEPYIS (173 aa)). Residues 32–39 (GRSNVGKS), 59–63 (GKTQT), 77–80 (DVPG), 144–147 (TKED), and 176–178 (YSS) each bind GTP. 2 residues coordinate Mg(2+): Ser-39 and Thr-61.

Belongs to the TRAFAC class TrmE-Era-EngA-EngB-Septin-like GTPase superfamily. EngB GTPase family. It depends on Mg(2+) as a cofactor.

Its function is as follows. Necessary for normal cell division and for the maintenance of normal septation. This Staphylococcus aureus (strain Mu3 / ATCC 700698) protein is Probable GTP-binding protein EngB.